The primary structure comprises 328 residues: Ribosomal RNA large subunit methyltransferase F (328 aa).

A disordered region spans residues 1-38; the sequence is MTDTPKPPRKKPQRPAKPAAPREKATLHPRNRHQGHYD.

It belongs to the methyltransferase superfamily. METTL16/RlmF family.

Its subcellular location is the cytoplasm. It carries out the reaction adenosine(1618) in 23S rRNA + S-adenosyl-L-methionine = N(6)-methyladenosine(1618) in 23S rRNA + S-adenosyl-L-homocysteine + H(+). Its function is as follows. Specifically methylates the adenine in position 1618 of 23S rRNA. This chain is Ribosomal RNA large subunit methyltransferase F, found in Pseudomonas syringae pv. tomato (strain ATCC BAA-871 / DC3000).